Consider the following 481-residue polypeptide: Adenosylhomocysteinase (481 aa).

The substrate site is built by T65, D140, and E200. Residue 201–203 (TTT) participates in NAD(+) binding. Substrate-binding residues include K230 and D234. NAD(+) contacts are provided by residues N235, 264 to 269 (GYGDVG), E287, N322, 343 to 345 (IGH), and N393.

This sequence belongs to the adenosylhomocysteinase family. Requires NAD(+) as cofactor.

The protein localises to the cytoplasm. The catalysed reaction is S-adenosyl-L-homocysteine + H2O = L-homocysteine + adenosine. It functions in the pathway amino-acid biosynthesis; L-homocysteine biosynthesis; L-homocysteine from S-adenosyl-L-homocysteine: step 1/1. Its function is as follows. May play a key role in the regulation of the intracellular concentration of adenosylhomocysteine. This Polynucleobacter necessarius subsp. necessarius (strain STIR1) protein is Adenosylhomocysteinase.